We begin with the raw amino-acid sequence, 118 residues long: Na(+)/H(+) antiporter subunit G1 (118 aa).

Transmembrane regions (helical) follow at residues 4-24, 38-58, and 60-80; these read IILI…SALA, AHAA…GTFL, and FIAT…FVLI.

The protein belongs to the CPA3 antiporters (TC 2.A.63) subunit G family. May form a heterooligomeric complex that consists of seven subunits: mnhA1, mnhB1, mnhC1, mnhD1, mnhE1, mnhF1 and mnhG1.

The protein resides in the cell membrane. Its function is as follows. Mnh complex is a Na(+)/H(+) antiporter involved in Na(+) excretion. This chain is Na(+)/H(+) antiporter subunit G1 (mnhG1), found in Staphylococcus aureus (strain Mu3 / ATCC 700698).